The primary structure comprises 447 residues: Putative vacuolar cation/proton exchanger 4 (447 aa).

The disordered stretch occupies residues 1–29 (MDKSEMDKINGTNPESTDQAPSLASRPDE). Over 1 to 65 (MDKSEMDKIN…VNWGVFGSMK (65 aa)) the chain is Cytoplasmic. The span at 10 to 22 (NGTNPESTDQAPS) shows a compositional bias: polar residues. The chain crosses the membrane as a helical span at residues 66–86 (IVFLKSKLNVLIPCGFLAIFL). At 87–93 (NYMTQRY) the chain is on the extracellular side. The chain crosses the membrane as a helical span at residues 94–114 (GWVFPLSMLGIIPLAERLGFA). Residues 115–122 (TDWQISCE) lie on the Cytoplasmic side of the membrane. Residues 123–143 (VGRLLNSAFGNATELIISIHA) form a helical membrane-spanning segment. Positions 132-167 (GNATELIISIHALSRGKLHVVQQCLLGSILSNLLLV) are cation selection. Residues 144-159 (LSRGKLHVVQQCLLGS) lie on the Extracellular side of the membrane. The chain crosses the membrane as a helical span at residues 160 to 180 (ILSNLLLVLGSAFFSGGLACG). The Cytoplasmic segment spans residues 181–190 (KTMQTFSKAD). The chain crosses the membrane as a helical span at residues 191–211 (AVVNSGLLLMAVMGLLIPAAL). The Extracellular segment spans residues 212–224 (HYTHSEAQFGKSE). A helical transmembrane segment spans residues 225–245 (LALSRFSSCIMLVAYASYLYF). At 246–286 (QLSNNRRRNEANVYPCMPLIKRRIQDDVDGNDDEVPEISKR) the chain is on the cytoplasmic side. Residues 287-307 (EAISWIAIFIAWISMLSYYLV) traverse the membrane as a helical segment. Residues 308–318 (DAIDGASKAWN) are Extracellular-facing. A helical transmembrane segment spans residues 319–339 (IPVAFISVVLLPVVGNSAGHA). Positions 333 to 368 (GNSAGHANAVMFAVKDKLDISLGVAIGSSIQISMFG) are cation selection. The Cytoplasmic segment spans residues 340–353 (NAVMFAVKDKLDIS). The chain crosses the membrane as a helical span at residues 354 to 374 (LGVAIGSSIQISMFGIPFCVV). Topologically, residues 375–384 (MGWMMGKPMD) are extracellular. The chain crosses the membrane as a helical span at residues 385-405 (LNFHLFETASLLTTVLVVAFL). The Cytoplasmic portion of the chain corresponds to 406-413 (LQDGTSNC). The helical transmembrane segment at 414-434 (VKGLMLFLCYLIVAASFYVHA) threads the bilayer. Over 435 to 447 (DPNSKASEKPPQN) the chain is Extracellular.

Belongs to the Ca(2+):cation antiporter (CaCA) (TC 2.A.19) family. Cation/proton exchanger (CAX) subfamily.

It localises to the vacuole membrane. Vacuolar cation/proton exchanger (CAX). Translocates Ca(2+) and other metal ions into vacuoles using the proton gradient formed by H(+)-ATPase and H(+)-pyrophosphatase. The protein is Putative vacuolar cation/proton exchanger 4 of Oryza sativa subsp. japonica (Rice).